The sequence spans 247 residues: MTTLFISDLHLDPARPAITELFLDFLRTQVPGSDALYILGDLFEAWIGDDTPSTAADAVAEALHAVATTGVPVFFMPGNRDFLVGAAYAQRAGFRILPDPTVIDLYGQPTLLMHGDLLCTDDTAYQAFRAQTRDPAFQAQFLSQPLAARVAFAQQARAASHARQSELKQGDQAQFETVTDVAPAEVDATFVRYGLDRIIHGHTHRPAIHTVQAGGRTCTRVVLGDWYEQGSVLRVDADGLALEQLAL.

Positions 8, 10, 41, 79, and 114 each coordinate Mn(2+). A substrate-binding site is contributed by 79-80 (NR). Substrate is bound by residues aspartate 122, serine 160, aspartate 171, glutamine 174, and histidine 202. Residues histidine 202 and histidine 204 each contribute to the Mn(2+) site.

This sequence belongs to the LpxH family. It depends on Mn(2+) as a cofactor.

Its subcellular location is the cell inner membrane. It catalyses the reaction UDP-2-N,3-O-bis[(3R)-3-hydroxytetradecanoyl]-alpha-D-glucosamine + H2O = 2-N,3-O-bis[(3R)-3-hydroxytetradecanoyl]-alpha-D-glucosaminyl 1-phosphate + UMP + 2 H(+). It functions in the pathway glycolipid biosynthesis; lipid IV(A) biosynthesis; lipid IV(A) from (3R)-3-hydroxytetradecanoyl-[acyl-carrier-protein] and UDP-N-acetyl-alpha-D-glucosamine: step 4/6. Hydrolyzes the pyrophosphate bond of UDP-2,3-diacylglucosamine to yield 2,3-diacylglucosamine 1-phosphate (lipid X) and UMP by catalyzing the attack of water at the alpha-P atom. Involved in the biosynthesis of lipid A, a phosphorylated glycolipid that anchors the lipopolysaccharide to the outer membrane of the cell. In Xanthomonas campestris pv. campestris (strain 8004), this protein is UDP-2,3-diacylglucosamine hydrolase.